The sequence spans 164 residues: Peptidyl-prolyl cis-trans isomerase A (164 aa).

M1 carries the post-translational modification N-acetylmethionine. Position 2 is an N-acetylvaline; in Peptidyl-prolyl cis-trans isomerase A, N-terminally processed (V2). The PPIase cyclophilin-type domain maps to F7 to Q163. K28 bears the N6-acetyllysine; alternate mark. A Glycyl lysine isopeptide (Lys-Gly) (interchain with G-Cter in SUMO2); alternate cross-link involves residue K28. K28 participates in a covalent cross-link: Glycyl lysine isopeptide (Lys-Gly) (interchain with G-Cter in ubiquitin); alternate. K44 and K76 each carry N6-acetyllysine. At S77 the chain carries Phosphoserine. The residue at position 82 (K82) is an N6-acetyllysine; alternate. A Glycyl lysine isopeptide (Lys-Gly) (interchain with G-Cter in SUMO2); alternate cross-link involves residue K82. T93 bears the Phosphothreonine mark. N108 is a glycosylation site (N-linked (GlcNAc...) asparagine). An N6-acetyllysine mark is found at K125 and K133.

This sequence belongs to the cyclophilin-type PPIase family. PPIase A subfamily. As to quaternary structure, interacts with protein phosphatase PPP3CA/calcineurin A. Interacts with isoform 2 of BSG/CD147. Interacts with FOXO1; the interaction promotes FOXO1 dephosphorylation, nuclear accumulation and transcriptional activity. Interacts with integrin ITGA2B:ITGB3; the interaction is ROS and peptidyl-prolyl cis-trans isomerase (PPIase) activity-dependent and is increased in the presence of thrombin. Interacts with MAP3K5. Interacts with TARDBP; the interaction is dependent on the RNA-binding activity of TARDBP and the PPIase activity of PPIA/CYPA and the acetylation of PPIA/CYPA at Lys-125 favors the interaction. Interacts with HNRNPA1, HNRNPA2B1, HNRNPC, RBMX, HNRNPK and HNRNPM. Post-translationally, acetylation at Lys-125 markedly inhibits catalysis of cis to trans isomerization. PPIA acetylation also antagonizes the immunosuppressive effects of cyclosporine by inhibiting the sequential steps of cyclosporine binding and calcineurin inhibition. Acetylation at Lys-125 favors the interaction with TARDBP.

Its subcellular location is the cytoplasm. The protein resides in the secreted. It localises to the nucleus. It catalyses the reaction [protein]-peptidylproline (omega=180) = [protein]-peptidylproline (omega=0). With respect to regulation, binds cyclosporin A (CsA). CsA mediates some of its effects via an inhibitory action on PPIase. In terms of biological role, catalyzes the cis-trans isomerization of proline imidic peptide bonds in oligopeptides. Exerts a strong chemotactic effect on leukocytes partly through activation of one of its membrane receptors BSG/CD147, initiating a signaling cascade that culminates in MAPK/ERK activation. Activates endothelial cells (ECs) in a proinflammatory manner by stimulating activation of NF-kappa-B and ERK, JNK and p38 MAP-kinases and by inducing expression of adhesion molecules including SELE and VCAM1. Induces apoptosis in ECs by promoting the FOXO1-dependent expression of CCL2 and BCL2L11 which are involved in EC chemotaxis and apoptosis. In response to oxidative stress, initiates proapoptotic and antiapoptotic signaling in ECs via activation of NF-kappa-B and AKT1 and up-regulation of antiapoptotic protein BCL2. Negatively regulates MAP3K5/ASK1 kinase activity, autophosphorylation and oxidative stress-induced apoptosis mediated by MAP3K5/ASK1. Necessary for the assembly of TARDBP in heterogeneous nuclear ribonucleoprotein (hnRNP) complexes and regulates TARDBP binding to RNA UG repeats and TARDBP-dependent expression of HDAC6, ATG7 and VCP which are involved in clearance of protein aggregates. Plays an important role in platelet activation and aggregation. Regulates calcium mobilization and integrin ITGA2B:ITGB3 bidirectional signaling via increased ROS production as well as by facilitating the interaction between integrin and the cell cytoskeleton. Binds heparan sulfate glycosaminoglycans. This Oryctolagus cuniculus (Rabbit) protein is Peptidyl-prolyl cis-trans isomerase A (PPIA).